Reading from the N-terminus, the 91-residue chain is Small ribosomal subunit protein uS19 (91 aa).

Belongs to the universal ribosomal protein uS19 family.

Its function is as follows. Protein S19 forms a complex with S13 that binds strongly to the 16S ribosomal RNA. The polypeptide is Small ribosomal subunit protein uS19 (Methylobacillus flagellatus (strain ATCC 51484 / DSM 6875 / VKM B-1610 / KT)).